The primary structure comprises 780 residues: ATP-dependent 6-phosphofructokinase, muscle type (780 aa).

Threonine 2 bears the N-acetylthreonine mark. Residues 2 to 390 (THEEHHATKT…NWEVYKLLAH (389 aa)) are N-terminal catalytic PFK domain 1. Residues glycine 25, 88 to 89 (RC), and 118 to 121 (GDGS) contribute to the ATP site. Aspartate 119 is a Mg(2+) binding site. Serine 133 is modified (phosphoserine). Substrate contacts are provided by residues 164 to 166 (SID), arginine 201, 208 to 210 (MGR), glutamate 264, arginine 292, and 298 to 301 (HVQR). Catalysis depends on aspartate 166, which acts as the Proton acceptor. Phosphoserine is present on serine 377. The tract at residues 391 to 401 (VRPPVSKSGSH) is interdomain linker. The tract at residues 402 to 780 (TVAVMNVGAP…TRKRSGEAAV (379 aa)) is C-terminal regulatory PFK domain 2. Beta-D-fructose 2,6-bisphosphate is bound by residues arginine 471 and 528-532 (TVSNN). Serine 530 is a glycosylation site (O-linked (GlcNAc) serine). Lysine 557 carries the post-translational modification N6-(2-hydroxyisobutyryl)lysine. Beta-D-fructose 2,6-bisphosphate contacts are provided by residues arginine 566, 573-575 (MGG), glutamate 629, arginine 655, and 661-664 (HMQQ). Serine 667 is subject to Phosphoserine. Residue arginine 735 participates in beta-D-fructose 2,6-bisphosphate binding. Phosphoserine is present on serine 775.

This sequence belongs to the phosphofructokinase type A (PFKA) family. ATP-dependent PFK group I subfamily. Eukaryotic two domain clade 'E' sub-subfamily. Homo- and heterotetramers. Phosphofructokinase (PFK) enzyme functions as a tetramer composed of different combinations of 3 types of subunits, called PFKM (M), PFKL (L) and PFKP (P). The composition of the PFK tetramer differs according to the tissue type it is present in. The kinetic and regulatory properties of the tetrameric enzyme are dependent on the subunit composition, hence can vary across tissues. Interacts (via C-terminus) with HK1 (via N-terminal spermatogenic cell-specific region). It depends on Mg(2+) as a cofactor. Post-translationally, glcNAcylation decreases enzyme activity.

Its subcellular location is the cytoplasm. The catalysed reaction is beta-D-fructose 6-phosphate + ATP = beta-D-fructose 1,6-bisphosphate + ADP + H(+). It participates in carbohydrate degradation; glycolysis; D-glyceraldehyde 3-phosphate and glycerone phosphate from D-glucose: step 3/4. Its activity is regulated as follows. Allosterically activated by ADP, AMP, or fructose 2,6-bisphosphate, and allosterically inhibited by ATP or citrate. Its function is as follows. Catalyzes the phosphorylation of D-fructose 6-phosphate to fructose 1,6-bisphosphate by ATP, the first committing step of glycolysis. This chain is ATP-dependent 6-phosphofructokinase, muscle type (PFKM), found in Pongo abelii (Sumatran orangutan).